We begin with the raw amino-acid sequence, 347 residues long: 5-formaminoimidazole-4-carboxamide-1-(beta)-D-ribofuranosyl 5'-monophosphate synthetase (347 aa).

5-amino-1-(5-phospho-beta-D-ribosyl)imidazole-4-carboxamide contacts are provided by His23 and Ser91. The 212-residue stretch at 112-323 (RKILLWESDQ…YSYLYWDEPM (212 aa)) folds into the ATP-grasp domain. Residues 142–196 (PDEV…VPAY) and Glu218 each bind ATP. Residue Asn244 participates in 5-amino-1-(5-phospho-beta-D-ribosyl)imidazole-4-carboxamide binding. The Mg(2+) site is built by Glu283 and Glu296.

The protein belongs to the phosphohexose mutase family. It depends on Mg(2+) as a cofactor. The cofactor is Mn(2+).

It catalyses the reaction 5-amino-1-(5-phospho-beta-D-ribosyl)imidazole-4-carboxamide + formate + ATP = 5-formamido-1-(5-phospho-D-ribosyl)imidazole-4-carboxamide + ADP + phosphate. The protein operates within purine metabolism; IMP biosynthesis via de novo pathway; 5-formamido-1-(5-phospho-D-ribosyl)imidazole-4-carboxamide from 5-amino-1-(5-phospho-D-ribosyl)imidazole-4-carboxamide (formate route): step 1/1. Its function is as follows. Catalyzes the ATP- and formate-dependent formylation of 5-aminoimidazole-4-carboxamide-1-beta-d-ribofuranosyl 5'-monophosphate (AICAR) to 5-formaminoimidazole-4-carboxamide-1-beta-d-ribofuranosyl 5'-monophosphate (FAICAR) in the absence of folates. The protein is 5-formaminoimidazole-4-carboxamide-1-(beta)-D-ribofuranosyl 5'-monophosphate synthetase of Ignicoccus hospitalis (strain KIN4/I / DSM 18386 / JCM 14125).